Here is a 256-residue protein sequence, read N- to C-terminus: Small ribosomal subunit protein eS1 (256 aa).

Alanine 2 carries the post-translational modification N-acetylalanine; partial.

It belongs to the eukaryotic ribosomal protein eS1 family. As to quaternary structure, component of the small ribosomal subunit. Mature ribosomes consist of a small (40S) and a large (60S) subunit. The 40S subunit contains about 33 different proteins and 1 molecule of RNA (18S). The 60S subunit contains about 49 different proteins and 3 molecules of RNA (25S, 5.8S and 5S).

It localises to the cytoplasm. The sequence is that of Small ribosomal subunit protein eS1 from Lentinula edodes (Shiitake mushroom).